Consider the following 378-residue polypeptide: Uroporphyrinogen decarboxylase (378 aa).

Substrate contacts are provided by residues Arg-40–Arg-44, Asp-90, Tyr-167, Ser-222, and His-355.

This sequence belongs to the uroporphyrinogen decarboxylase family. In terms of assembly, homodimer.

The protein resides in the cytoplasm. The enzyme catalyses uroporphyrinogen III + 4 H(+) = coproporphyrinogen III + 4 CO2. It functions in the pathway porphyrin-containing compound metabolism; protoporphyrin-IX biosynthesis; coproporphyrinogen-III from 5-aminolevulinate: step 4/4. In terms of biological role, catalyzes the decarboxylation of four acetate groups of uroporphyrinogen-III to yield coproporphyrinogen-III. This chain is Uroporphyrinogen decarboxylase, found in Psychrobacter cryohalolentis (strain ATCC BAA-1226 / DSM 17306 / VKM B-2378 / K5).